A 144-amino-acid chain; its full sequence is Large ribosomal subunit protein uL11 (144 aa).

The protein belongs to the universal ribosomal protein uL11 family. As to quaternary structure, part of the ribosomal stalk of the 50S ribosomal subunit. Interacts with L10 and the large rRNA to form the base of the stalk. L10 forms an elongated spine to which L12 dimers bind in a sequential fashion forming a multimeric L10(L12)X complex. Post-translationally, one or more lysine residues are methylated.

In terms of biological role, forms part of the ribosomal stalk which helps the ribosome interact with GTP-bound translation factors. The protein is Large ribosomal subunit protein uL11 of Streptomyces sp. (strain FRI-5).